A 220-amino-acid chain; its full sequence is Redox-sensing transcriptional repressor Rex (220 aa).

A DNA-binding region (H-T-H motif) is located at residues 25 to 64; the sequence is WYLSNVKLLKQRGERFVSSTQISKEINIDASQIAKDLSYV. 99–104 serves as a coordination point for NAD(+); sequence GVGSLG.

Belongs to the transcriptional regulatory Rex family. As to quaternary structure, homodimer.

It localises to the cytoplasm. Its function is as follows. Modulates transcription in response to changes in cellular NADH/NAD(+) redox state. This chain is Redox-sensing transcriptional repressor Rex, found in Bacteroides thetaiotaomicron (strain ATCC 29148 / DSM 2079 / JCM 5827 / CCUG 10774 / NCTC 10582 / VPI-5482 / E50).